Reading from the N-terminus, the 543-residue chain is Chaperonin GroEL (543 aa).

ATP contacts are provided by residues 29–32 (TVGP), 86–90 (DGTTT), Gly413, and Asp504.

It belongs to the chaperonin (HSP60) family. Forms a cylinder of 14 subunits composed of two heptameric rings stacked back-to-back. Interacts with the co-chaperonin GroES.

The protein resides in the cytoplasm. It carries out the reaction ATP + H2O + a folded polypeptide = ADP + phosphate + an unfolded polypeptide.. Functionally, together with its co-chaperonin GroES, plays an essential role in assisting protein folding. The GroEL-GroES system forms a nano-cage that allows encapsulation of the non-native substrate proteins and provides a physical environment optimized to promote and accelerate protein folding. The protein is Chaperonin GroEL of Mycoplasma genitalium (strain ATCC 33530 / DSM 19775 / NCTC 10195 / G37) (Mycoplasmoides genitalium).